A 343-amino-acid chain; its full sequence is Dihydroorotase (343 aa).

Histidine 14 and histidine 16 together coordinate Zn(2+). Residues 16-18 (HVR) and asparagine 42 each bind substrate. Zn(2+) contacts are provided by lysine 98, histidine 135, and histidine 173. Lysine 98 bears the N6-carboxylysine mark. Histidine 135 contributes to the substrate binding site. Residue leucine 219 participates in substrate binding. Aspartate 247 contacts Zn(2+). Residue aspartate 247 is part of the active site. Residues histidine 251 and alanine 263 each coordinate substrate.

The protein belongs to the metallo-dependent hydrolases superfamily. DHOase family. Class II DHOase subfamily. In terms of assembly, homodimer. It depends on Zn(2+) as a cofactor.

The catalysed reaction is (S)-dihydroorotate + H2O = N-carbamoyl-L-aspartate + H(+). It participates in pyrimidine metabolism; UMP biosynthesis via de novo pathway; (S)-dihydroorotate from bicarbonate: step 3/3. In terms of biological role, catalyzes the reversible cyclization of carbamoyl aspartate to dihydroorotate. This chain is Dihydroorotase, found in Marinobacter nauticus (strain ATCC 700491 / DSM 11845 / VT8) (Marinobacter aquaeolei).